Consider the following 504-residue polypeptide: MTTNNGFDSLHSHAQRLKGASIPSLLAAEPGRVQELALRVGPLYVSFARQTYDAAALQALLALAAERDVGAAITRLFRGEQVNLTEGRAALHTALRGDVVDAPVAAEAYATARDIRQRMGVLVRALEDSGVTDVVSVGIGGSDLGPRLVADALRPVTGARLRVHFVSNVDGAAMQRTLATLDPAKTAGILISKTFGTQETLLNGQILHDWLGGSERLYAVSANPERAAKAFAIAADRVLPMWDWVGGRYSLWSAVGFPIALAIGFERFEQLLEGAAQMDAHALDAPLERNLPVLHGLTDIWNRNLLGYATHAVMTYDQRLALLPAYLQQLVMESLGKRVQRDGQPVTTDTVPVWWGGAGTDVQHSFFQALHQGTSIIPADFIGCVHNDDPYTINHQALLANLLAQTEALANGQGSDDPHRDYPGGRPSTLILLDALTPQALGALIAMYEHAVYVQSVIWNINAFDQFGVELGKQLASGLLPALQGEDVAVADLMTREILAQLKR.

The active-site Proton donor is E333. Active-site residues include H364 and K473.

The protein belongs to the GPI family.

The protein resides in the cytoplasm. The catalysed reaction is alpha-D-glucose 6-phosphate = beta-D-fructose 6-phosphate. The protein operates within carbohydrate biosynthesis; gluconeogenesis. It participates in carbohydrate degradation; glycolysis; D-glyceraldehyde 3-phosphate and glycerone phosphate from D-glucose: step 2/4. In terms of biological role, catalyzes the reversible isomerization of glucose-6-phosphate to fructose-6-phosphate. In Stenotrophomonas maltophilia (strain R551-3), this protein is Glucose-6-phosphate isomerase.